We begin with the raw amino-acid sequence, 100 residues long: Small ribosomal subunit protein uS14c (100 aa).

Belongs to the universal ribosomal protein uS14 family. Part of the 30S ribosomal subunit.

Its subcellular location is the plastid. It is found in the chloroplast. Functionally, binds 16S rRNA, required for the assembly of 30S particles. This chain is Small ribosomal subunit protein uS14c, found in Glycine max (Soybean).